The sequence spans 81 residues: ATP synthase subunit C, plastid (81 aa).

The next 2 membrane-spanning stretches (helical) occupy residues 3–23 (PIIS…ASIG) and 57–77 (LAFM…LLFA).

It belongs to the ATPase C chain family. In terms of assembly, F-type ATPases have 2 components, F(1) - the catalytic core - and F(0) - the membrane proton channel. F(1) has five subunits: alpha(3), beta(3), gamma(1), delta(1), epsilon(1). F(0) has four main subunits: a(1), b(1), b'(1) and c(10-14). The alpha and beta chains form an alternating ring which encloses part of the gamma chain. F(1) is attached to F(0) by a central stalk formed by the gamma and epsilon chains, while a peripheral stalk is formed by the delta, b and b' chains.

It localises to the plastid membrane. F(1)F(0) ATP synthase produces ATP from ADP in the presence of a proton or sodium gradient. F-type ATPases consist of two structural domains, F(1) containing the extramembraneous catalytic core and F(0) containing the membrane proton channel, linked together by a central stalk and a peripheral stalk. During catalysis, ATP synthesis in the catalytic domain of F(1) is coupled via a rotary mechanism of the central stalk subunits to proton translocation. Functionally, key component of the F(0) channel; it plays a direct role in translocation across the membrane. A homomeric c-ring of between 10-14 subunits forms the central stalk rotor element with the F(1) delta and epsilon subunits. This Cuscuta gronovii (Common dodder) protein is ATP synthase subunit C, plastid.